Here is a 2522-residue protein sequence, read N- to C-terminus: Unconventional myosin-IXAa (2522 aa).

In terms of domain architecture, Ras-associating spans 15–113 (SELTLRIYPG…YRFLLREKNL (99 aa)). The region spanning 147-1007 (KDFDDLCNLP…ERQRLQDLLH (861 aa)) is the Myosin motor domain. Residues 176 to 196 (IYTYVGSILIVINPFKFLPIY) traverse the membrane as a helical segment. 240–247 (GESGSGKT) contributes to the ATP binding site. Residues 767–802 (VNRRNPRTPLSDLQGSNAINQREGWNGRPGRQNRLS) form a disordered region. Residues 777–786 (SDLQGSNAIN) are compositionally biased toward polar residues. Residues 888–910 (LNKLMETLGQSQPYFVKCIRSNS) form an actin-binding region. 4 consecutive IQ domains span residues 1012 to 1039 (SRIV…AACQ), 1063 to 1092 (QEGA…ASVL), 1102 to 1131 (QRRA…ATIR), and 1125 to 1154 (QRDA…QRLK). Positions 1012–1149 (SRIVYLQRRF…LARQRFRELQ (138 aa)) are neck or regulatory domain. Residues 1150–2497 (KQRLKITHLP…LQGAKSSPQR (1348 aa)) form a tail region. Disordered stretches follow at residues 1218–1254 (GMAP…RRMR), 1318–1409 (DKAP…STRR), 1424–1612 (NEAD…GNIF), 1630–1754 (NQEK…GRVR), 1799–1827 (RLSP…VKRR), and 1962–1983 (LDSS…KDTD). Basic and acidic residues predominate over residues 1229 to 1242 (TIRERPRTLEDPNQ). 2 stretches are compositionally biased toward polar residues: residues 1330-1349 (SPSS…STPD) and 1366-1390 (SLPT…NSVT). Basic and acidic residues-rich tracts occupy residues 1399 to 1408 (PSKDKKESTR) and 1426 to 1435 (ADVKPLEVKD). A compositionally biased stretch (polar residues) spans 1437–1454 (AAQTSEPPSPAQPSTDSS). The stretch at 1456–1525 (VLEKLEKLNE…LRRIEQSRQE (70 aa)) forms a coiled coil. 4 stretches are compositionally biased toward basic and acidic residues: residues 1458–1484 (EKLE…EMME), 1492–1523 (ILEE…EQSR), 1549–1566 (PARE…RPKD), and 1580–1589 (LESRGDEARS). Polar residues-rich tracts occupy residues 1594-1604 (KPSNQNVNISM) and 1631-1641 (QEKTPGAQNEV). A compositionally biased stretch (basic residues) spans 1656–1665 (PGHKKARMAR). Positions 1681 to 1690 (GESEEEEYDE) are enriched in acidic residues. Basic and acidic residues-rich tracts occupy residues 1738–1753 (LGKH…DGRV) and 1810–1822 (LQRE…EPSP). The Phorbol-ester/DAG-type zinc-finger motif lies at 1990–2039 (GHIFKSTQYSIPTYCEYCSSLIWMMDKACVCKLCRYACHRKCCQKMTTKC). In terms of domain architecture, Rho-GAP spans 2054–2242 (VELSRLTNDE…LIICEQMNKY (189 aa)). 2 disordered regions span residues 2274-2325 (PVHR…QEEK) and 2348-2522 (LEPR…EFMV). Residues 2317–2344 (QVAMQQEEKVLTEQIESLQKEKEELTFE) are a coiled coil. Positions 2366-2383 (TADSSENLNVDSEGATSD) are enriched in polar residues. Residues 2413-2429 (SLDSIDSCSTVSSVSSS) are compositionally biased toward low complexity. Over residues 2436–2448 (RTHKLSLRSKSPS) the composition is skewed to basic residues. Residues 2497–2506 (RHREQKKDPE) are compositionally biased toward basic and acidic residues.

It belongs to the TRAFAC class myosin-kinesin ATPase superfamily. Myosin family.

It localises to the membrane. Its subcellular location is the cytoplasm. It is found in the synapse. The protein resides in the cell projection. The protein localises to the growth cone. Its function is as follows. Myosins are actin-based motor molecules with ATPase activity. Unconventional myosins serve in intracellular movements. Regulates Rho by stimulating it's GTPase activity in neurons. Required for the regulation of neurite branching and motor neuron axon guidance. This chain is Unconventional myosin-IXAa (myo9aa), found in Danio rerio (Zebrafish).